We begin with the raw amino-acid sequence, 958 residues long: Probable transport protein MmpL1 (958 aa).

Transmembrane regions (helical) follow at residues 19-39 (ALSL…NVVA), 192-212 (SLHT…FIAY), 216-236 (SAAL…RGII), 252-272 (VNVL…FLVG), 295-315 (TAHV…CLGF), 329-349 (AIGL…IIAV), 377-397 (WPGP…LALP), 762-782 (YDVM…MLGI), 791-811 (VIVG…VLIW), 814-834 (ILHM…MLAV), 868-888 (VVTI…ASDL), and 906-927 (TLVV…WFWW).

The protein belongs to the resistance-nodulation-cell division (RND) (TC 2.A.6) family. MmpL subfamily.

It is found in the cell membrane. This is Probable transport protein MmpL1 (mmpL1) from Mycobacterium tuberculosis (strain CDC 1551 / Oshkosh).